A 349-amino-acid polypeptide reads, in one-letter code: UDP-N-acetylenolpyruvoylglucosamine reductase (349 aa).

Residues 24-197 (FGIDATARFA…VAVTFRLPKR (174 aa)) enclose the FAD-binding PCMH-type domain. The active site involves Arg173. Ser249 (proton donor) is an active-site residue. The active site involves Glu345.

The protein belongs to the MurB family. Requires FAD as cofactor.

It is found in the cytoplasm. The catalysed reaction is UDP-N-acetyl-alpha-D-muramate + NADP(+) = UDP-N-acetyl-3-O-(1-carboxyvinyl)-alpha-D-glucosamine + NADPH + H(+). It functions in the pathway cell wall biogenesis; peptidoglycan biosynthesis. In terms of biological role, cell wall formation. The polypeptide is UDP-N-acetylenolpyruvoylglucosamine reductase (Burkholderia ambifaria (strain MC40-6)).